Consider the following 1721-residue polypeptide: Latent-transforming growth factor beta-binding protein 1 (1721 aa).

An N-terminal signal peptide occupies residues 1–23 (MAGAWLRWGLLLWAGLLASSAHG). The span at 64–81 (RSSAAAGAPSRASPGVPS) shows a compositional bias: low complexity. The disordered stretch occupies residues 64 to 158 (RSSAAAGAPS…SGGGSRLQVH (95 aa)). A compositionally biased stretch (pro residues) spans 99-111 (RPPPPPPPEPARP). The span at 112–130 (AVPGGQLHPNPGGHPAAAP) shows a compositional bias: low complexity. The region spanning 187–219 (TKPSCVPPCQNGGMCLRPQLCVCKPGTKGKACE) is the EGF-like 1 domain. Disulfide bonds link Cys191–Cys201, Cys195–Cys207, and Cys209–Cys218. Residues 228–259 (SPVFGGQSPGAASSWGPPEQAAKHTSSKKADT) are disordered. N-linked (GlcNAc...) asparagine glycosylation is found at Asn347 and Asn378. Residues 399-431 (RVVICHLPCMNGGQCSSRDKCQCPPNFTGKLCQ) enclose the EGF-like 2 domain. 6 disulfides stabilise this stretch: Cys403–Cys413, Cys407–Cys419, Cys421–Cys430, Cys559–Cys581, Cys568–Cys594, and Cys582–Cys597. The N-linked (GlcNAc...) asparagine glycan is linked to Asn424. Positions 557-609 (GRCFQETIGSQCGKALPGLSKQEDCCGTVGTSWGFNKCQKCPKKPSYHGYNQM) constitute a TB 1 domain. N-linked (GlcNAc...) asparagine glycosylation occurs at Asn620. An EGF-like 3; calcium-binding domain is found at 626–663 (DINECQLQGVCPNGECLNTMGSYRCTCKIGFGPDPTFS). 7 disulfide bridges follow: Cys630–Cys641, Cys636–Cys650, Cys652–Cys665, Cys679–Cys702, Cys689–Cys714, Cys703–Cys717, and Cys704–Cys729. A glycan (O-linked (Glc) serine) is linked at Ser647. One can recognise a TB 2 domain in the interval 677-729 (GPCYRLVSSGRQCMHPLSVHLTKQLCCCSVGKAWGPHCEKCPLPGTAAFKEIC). The segment at 750-811 (VGKGPVFVKP…APPEKEIPSL (62 aa)) is disordered. O-linked (GalNAc...) threonine glycans are attached at residues Thr769 and Thr801. An EGF-like 4; calcium-binding domain is found at 873 to 910 (EINECTVNPDICGAGHCINLPVRYTCICYEGYRFSEQQ). Disulfide bonds link Cys877-Cys889, Cys884-Cys898, Cys900-Cys913, Cys919-Cys931, Cys926-Cys940, Cys942-Cys955, Cys961-Cys972, Cys967-Cys981, Cys984-Cys996, Cys1002-Cys1013, Cys1008-Cys1022, Cys1025-Cys1036, Cys1042-Cys1053, Cys1048-Cys1062, Cys1064-Cys1077, Cys1083-Cys1094, Cys1089-Cys1103, Cys1105-Cys1118, Cys1124-Cys1135, Cys1130-Cys1144, Cys1146-Cys1159, Cys1165-Cys1177, Cys1172-Cys1186, Cys1188-Cys1200, Cys1206-Cys1218, Cys1212-Cys1227, Cys1229-Cys1242, Cys1248-Cys1260, and Cys1254-Cys1269. One can recognise an EGF-like 5; calcium-binding domain in the interval 915–956 (DIDECTQVQHLCSQGRCENTEGSFLCICPAGFMASEEGTNCI). O-linked (Glc) serine glycosylation is present at Ser937. One can recognise an EGF-like 6; calcium-binding domain in the interval 957–997 (DVDECLRPDVCGEGHCVNTVGAFRCEYCDSGYRMTQRGRCE). Asn974 is modified ((3R)-3-hydroxyasparagine). Residues 998 to 1037 (DIDECLNPSTCPDEQCVNSPGSYQCVPCTEGFRGWNGQCL) enclose the EGF-like 7; calcium-binding domain. O-linked (Glc) serine glycosylation occurs at Ser1019. The EGF-like 8; calcium-binding domain occupies 1038 to 1078 (DVDECLEPNVCANGDCSNLEGSYMCSCHKGYTRTPDHKHCR). O-linked (Glc) serine glycosylation is present at Ser1059. The EGF-like 9; calcium-binding domain maps to 1079 to 1119 (DIDECQQGNLCVNGQCKNTEGSFRCTCGQGYQLSAAKDQCE). The EGF-like 10; calcium-binding domain occupies 1120 to 1160 (DIDECQHRHLCAHGQCRNTEGSFQCVCDQGYRASGLGDHCE). A (3R)-3-hydroxyasparagine modification is found at Asn1137. Ser1141 carries O-linked (Glc) serine glycosylation. An EGF-like 11; calcium-binding domain is found at 1161–1201 (DINECLEDKSVCQRGDCINTAGSYDCTCPDGFQLDDNKTCQ). The Cell attachment site motif lies at 1174–1176 (RGD). A glycan (N-linked (GlcNAc...) asparagine) is linked at Asn1197. An EGF-like 12; calcium-binding domain is found at 1202-1243 (DINECEHPGLCGPQGECLNTEGSFHCVCQQGFSISADGRTCE). A glycan (O-linked (Glc) serine) is linked at Ser1224. The EGF-like 13; calcium-binding domain occupies 1244-1281 (DIDECVNNTVCDSHGFCDNTAGSFRCLCYQGFQAPQDG). A glycan (N-linked (GlcNAc...) asparagine) is linked at Asn1250. The EGF-like 14; calcium-binding domain maps to 1286 to 1328 (DVNECELLSGVCGEAFCENVEGSFLCVCADENQEYSPMTGQCR). An 8-Cys3 region region spans residues 1344–1411 (EEKKECYYNL…PKGKGFVPAG (68 aa)). A TB 3 domain is found at 1347-1401 (KECYYNLNDASLCDNVLAPNVTKQECCCTSGVGWGDNCEIFPCPVLGTAEFTEMC). Disulfide bonds link Cys1349–Cys1372, Cys1359–Cys1384, Cys1373–Cys1389, and Cys1374–Cys1401. Asn1366 is a glycosylation site (N-linked (GlcNAc...) asparagine). At Ser1414 the chain carries Phosphoserine; by FAM20C. Residues 1424-1466 (DADECLLFGQEICKNGFCLNTRPGYECYCKQGTYYDPVKLQCF) enclose the EGF-like 15; calcium-binding domain. One can recognise an EGF-like 16; calcium-binding domain in the interval 1467–1503 (DMDECQDPSSCIDGQCVNTEGSYNCFCTHPMVLDASE). 6 cysteine pairs are disulfide-bonded: Cys1471-Cys1482, Cys1477-Cys1491, Cys1526-Cys1550, Cys1536-Cys1562, Cys1551-Cys1565, and Cys1552-Cys1577. An O-linked (Glc) serine glycan is attached at Ser1488. Residues 1507 to 1721 (IRPAESNEQI…LNLEKDSDLE (215 aa)) are C-terminal domain. One can recognise a TB 4 domain in the interval 1524 to 1577 (DLCWEHLSDEYVCSRPLVGKQTTYTECCCLYGEAWGMQCALCPLKDSDDYAQLC). Residues Ser1597 and Ser1616 each carry the phosphoserine modification. The EGF-like 17 domain occupies 1621–1657 (QAEECGILNGCENGRCVRVQEGYTCDCFDGYHLDTAK). 5 disulfides stabilise this stretch: Cys1625-Cys1636, Cys1631-Cys1645, Cys1666-Cys1681, Cys1676-Cys1690, and Cys1692-Cys1705. In terms of domain architecture, EGF-like 18; calcium-binding spans 1662 to 1706 (DVNECDELNNRMSLCKNAKCINTDGSYKCLCLPGYVPSDKPNYCT). Residue Ser1687 is glycosylated (O-linked (Glc) serine).

This sequence belongs to the LTBP family. Interacts with TGFB1; associates via disulfide bonds with the Latency-associated peptide chain (LAP) regulatory chain of TGFB1, leading to regulate activation of TGF-beta-1. LTBP1 does not bind directly to TGF-beta-1, the active chain of TGFB1. Interacts (via C-terminal domain) with FBN1 (via N-terminal domain). Interacts with FBN2. Interacts with ADAMTSL2. Interacts with EFEMP2. Contains hydroxylated asparagine residues. Post-translationally, isoform Short N-terminus is blocked. In terms of processing, two intrachain disulfide bonds from the TB3 domain are rearranged upon TGFB1 binding, and form interchain bonds with TGFB1 propeptide, anchoring it to the extracellular matrix. O-glycosylated on serine residues by POGLUT2 and POGLUT3. As to expression, expressed in the aorta (at protein level). Isoform Long: Expressed in fibroblasts.

The protein localises to the secreted. Its subcellular location is the extracellular space. It is found in the extracellular matrix. Key regulator of transforming growth factor beta (TGFB1, TGFB2 and TGFB3) that controls TGF-beta activation by maintaining it in a latent state during storage in extracellular space. Associates specifically via disulfide bonds with the Latency-associated peptide (LAP), which is the regulatory chain of TGF-beta, and regulates integrin-dependent activation of TGF-beta. Outcompeted by LRRC32/GARP for binding to LAP regulatory chain of TGF-beta. This chain is Latent-transforming growth factor beta-binding protein 1, found in Homo sapiens (Human).